Consider the following 196-residue polypeptide: Putative lipopolysaccharide biosynthesis O-acetyl transferase WbbJ (196 aa).

It belongs to the transferase hexapeptide repeat family.

It functions in the pathway bacterial outer membrane biogenesis; lipopolysaccharide biosynthesis. Putative O-acetyltransferase that transfers an O-acetyl group to the O antigen. The polypeptide is Putative lipopolysaccharide biosynthesis O-acetyl transferase WbbJ (wbbJ) (Escherichia coli (strain K12)).